A 1183-amino-acid polypeptide reads, in one-letter code: Chromosome partition protein Smc (1183 aa).

An ATP-binding site is contributed by 32–39 (PNGCGKTN). 2 coiled-coil regions span residues 167–322 (ITRY…ERLN) and 358–497 (AEFE…ALCN). A disordered region spans residues 409-442 (KEHLEGSVNRLDQRKRDLERSMEQAEPERRRTSE). The span at 419–442 (LDQRKRDLERSMEQAEPERRRTSE) shows a compositional bias: basic and acidic residues. One can recognise an SMC hinge domain in the interval 523–632 (LGCLSDLISV…VADLDAAEQL (110 aa)). 2 coiled-coil regions span residues 669–941 (GKKA…VMER) and 980–1025 (NELA…ALEK).

This sequence belongs to the SMC family. Homodimer.

Its subcellular location is the cytoplasm. Required for chromosome condensation and partitioning. The chain is Chromosome partition protein Smc from Chlorobaculum tepidum (strain ATCC 49652 / DSM 12025 / NBRC 103806 / TLS) (Chlorobium tepidum).